Consider the following 301-residue polypeptide: Glycine--tRNA ligase alpha subunit (301 aa).

This sequence belongs to the class-II aminoacyl-tRNA synthetase family. In terms of assembly, tetramer of two alpha and two beta subunits.

Its subcellular location is the cytoplasm. It carries out the reaction tRNA(Gly) + glycine + ATP = glycyl-tRNA(Gly) + AMP + diphosphate. The protein is Glycine--tRNA ligase alpha subunit of Actinobacillus pleuropneumoniae serotype 5b (strain L20).